The chain runs to 277 residues: S-formylglutathione hydrolase FrmB (277 aa).

Catalysis depends on charge relay system residues Ser-145, Asp-221, and His-254.

It belongs to the esterase D family.

The catalysed reaction is S-formylglutathione + H2O = formate + glutathione + H(+). In terms of biological role, serine hydrolase involved in the detoxification of formaldehyde. Hydrolyzes S-formylglutathione to glutathione and formate. This Escherichia coli O9:H4 (strain HS) protein is S-formylglutathione hydrolase FrmB (frmB).